Reading from the N-terminus, the 478-residue chain is Proline--tRNA ligase (478 aa).

The protein belongs to the class-II aminoacyl-tRNA synthetase family. ProS type 3 subfamily. Homodimer.

It localises to the cytoplasm. It catalyses the reaction tRNA(Pro) + L-proline + ATP = L-prolyl-tRNA(Pro) + AMP + diphosphate. Functionally, catalyzes the attachment of proline to tRNA(Pro) in a two-step reaction: proline is first activated by ATP to form Pro-AMP and then transferred to the acceptor end of tRNA(Pro). The sequence is that of Proline--tRNA ligase from Clostridium botulinum (strain Langeland / NCTC 10281 / Type F).